The chain runs to 434 residues: MPLKSLKNRLNQHFELSPRYGSVKKIMPNIVYADGFNPSVGDVVKIEKSDGTECVGMVVVAEKEQFGFTPFNFIEGARAGDKVLFLKEGLNFPVGRNLLGRVLNPLGQVIDNKGVLDYERLAPVITTPIAPLKRGLIDEVFSVGVKSIDGLLTCGKGQKLGIFAGSGVGKSTLMGMITRGCLAPIKVIALIGERGREIPEFIEKNLKGDLSSCVLVVATSDDSPLMRKYGAFCAMSVAEYFKNQGLDVLFIMDSVTRFAMAQREIGLALGEPPTSKGYPPSALSLLPQLMERAGKEENKGSITAFFSVLVEGDDLSDPIADQARSILDGHIVLSRELTDYGIYPPINILNSASRVAKDIISESQNLCARKFRRLYALLKENEMLIRIGSYQMGNDKELDEAIKKKALMEQFLVQDENALQPFEQSFQQLEEILR.

164–171 (AGSGVGKS) contributes to the ATP binding site.

It belongs to the ATPase alpha/beta chains family.

Its subcellular location is the cytoplasm. It catalyses the reaction ATP + H2O + 4 H(+)(in) = ADP + phosphate + 5 H(+)(out). Functionally, probable catalytic subunit of a protein translocase for flagellum-specific export, or a proton translocase involved in local circuits at the flagellum. This chain is Flagellum-specific ATP synthase (fliI), found in Helicobacter pylori (strain J99 / ATCC 700824) (Campylobacter pylori J99).